The sequence spans 434 residues: Adenylosuccinate synthetase (434 aa).

GTP contacts are provided by residues 22-28 and 50-52; these read GDEGKGK and GHT. Aspartate 23 acts as the Proton acceptor in catalysis. Mg(2+)-binding residues include aspartate 23 and glycine 50. Residues 23–26, 48–51, threonine 139, arginine 153, glutamine 234, threonine 249, and arginine 313 each bind IMP; these read DEGK and NAGH. Histidine 51 serves as the catalytic Proton donor. 309-315 serves as a coordination point for substrate; the sequence is ATTGRKR. GTP contacts are provided by residues arginine 315, 341–343, and 423–425; these read KLD and SVG.

The protein belongs to the adenylosuccinate synthetase family. As to quaternary structure, homodimer. The cofactor is Mg(2+).

The protein resides in the cytoplasm. It carries out the reaction IMP + L-aspartate + GTP = N(6)-(1,2-dicarboxyethyl)-AMP + GDP + phosphate + 2 H(+). Its pathway is purine metabolism; AMP biosynthesis via de novo pathway; AMP from IMP: step 1/2. Functionally, plays an important role in the de novo pathway of purine nucleotide biosynthesis. Catalyzes the first committed step in the biosynthesis of AMP from IMP. The polypeptide is Adenylosuccinate synthetase (Chlorobium phaeobacteroides (strain DSM 266 / SMG 266 / 2430)).